The following is a 478-amino-acid chain: F-box protein YDR306C (478 aa).

Basic residues predominate over residues 1-14 (MANKSRPKKIKAPY). 2 disordered regions span residues 1 to 32 (MANKSRPKKIKAPYRKYVAGEGFSSTRNDNKA) and 67 to 101 (RLSNEKKDKKGRKQSPSSSSTSSSKGEKNGKVIES). A compositionally biased stretch (low complexity) spans 80–90 (QSPSSSSTSSS). Over residues 91 to 101 (KGEKNGKVIES) the composition is skewed to basic and acidic residues. An F-box domain is found at 112 to 173 (KMVLPWEIQH…CLPKLYYAPA (62 aa)).

In terms of assembly, interacts with SKP1. Component of the probable SCF(YDR306C) complex containing CDC53, SKP1, RBX1 and YDR306C. In terms of processing, autoubiquitinated by the E3 ubiquitin ligase complex in conjunction with the E2 enzyme CDC34.

It participates in protein modification; protein ubiquitination. In terms of biological role, substrate recognition component of a SCF (SKP1-CUL1-F-box protein) E3 ubiquitin-protein ligase complex which mediates the ubiquitination and subsequent proteasomal degradation of target proteins. Probably recognizes and binds to phosphorylated target proteins. The sequence is that of F-box protein YDR306C from Saccharomyces cerevisiae (strain ATCC 204508 / S288c) (Baker's yeast).